The primary structure comprises 1355 residues: Probable major glycoprotein (1355 aa).

A signal peptide spans 1 to 16; the sequence is MKKTMLAIILIPLVYA. N81, N112, N129, N169, N173, N192, N542, N655, N682, N744, N780, N811, N815, N860, N865, N882, N895, N1213, N1225, N1267, and N1274 each carry an N-linked (GlcNAc...) asparagine; by host glycan. Positions 1245–1299 form a coiled coil; that stretch reads QIVSMEMEIQDLKLELIQLQKINTSVHMENITGDIDAMKATIEEYRAEMAKLRVT. Residues 1308-1328 form a helical membrane-spanning segment; sequence FIYAILGVIAIGALIAIIFMA.

The protein localises to the host membrane. In Ictaluridae (bullhead catfishes), this protein is Probable major glycoprotein (ORF46).